Consider the following 231-residue polypeptide: Orotidine 5'-phosphate decarboxylase (231 aa).

Residues Asp12, Lys34, 61-70 (DMKLLDIDNT), Thr116, Arg177, Gln186, Gly206, and Arg207 each bind substrate. Lys63 (proton donor) is an active-site residue.

This sequence belongs to the OMP decarboxylase family. Type 1 subfamily. Homodimer.

The catalysed reaction is orotidine 5'-phosphate + H(+) = UMP + CO2. It functions in the pathway pyrimidine metabolism; UMP biosynthesis via de novo pathway; UMP from orotate: step 2/2. Catalyzes the decarboxylation of orotidine 5'-monophosphate (OMP) to uridine 5'-monophosphate (UMP). This is Orotidine 5'-phosphate decarboxylase from Allorhizobium ampelinum (strain ATCC BAA-846 / DSM 112012 / S4) (Agrobacterium vitis (strain S4)).